The primary structure comprises 195 residues: Protein GrpE (195 aa).

A compositionally biased stretch (basic and acidic residues) spans 1–20; that stretch reads MSSKEQKTPDEQVLDQKEAA. The interval 1 to 40 is disordered; that stretch reads MSSKEQKTPDEQVLDQKEAAKGQQADAAPETADVADPRDA.

Belongs to the GrpE family. Homodimer.

The protein localises to the cytoplasm. Participates actively in the response to hyperosmotic and heat shock by preventing the aggregation of stress-denatured proteins, in association with DnaK and GrpE. It is the nucleotide exchange factor for DnaK and may function as a thermosensor. Unfolded proteins bind initially to DnaJ; upon interaction with the DnaJ-bound protein, DnaK hydrolyzes its bound ATP, resulting in the formation of a stable complex. GrpE releases ADP from DnaK; ATP binding to DnaK triggers the release of the substrate protein, thus completing the reaction cycle. Several rounds of ATP-dependent interactions between DnaJ, DnaK and GrpE are required for fully efficient folding. This is Protein GrpE from Pectobacterium carotovorum subsp. carotovorum (strain PC1).